A 336-amino-acid chain; its full sequence is Atypical chemokine receptor 1 (336 aa).

Positions 1-30 (MGNCLHRAELSPSTENSSQLDFEDVWNSSY) are mediates Plasmodium vivax Duffy receptor (PVDR) binding. Residues 1–63 (MGNCLHRAEL…CNLLDDSALP (63 aa)) are Extracellular-facing. A glycan (N-linked (GlcNAc...) asparagine) is linked at Asn-16. Tyr-30 is modified (sulfotyrosine). Asn-33 carries N-linked (GlcNAc...) asparagine glycosylation. Position 41 is a sulfotyrosine (Tyr-41). 2 disulfide bridges follow: Cys-51–Cys-276 and Cys-129–Cys-195. Residues 64–84 (FFILTSVLGILASSTVLFMLF) traverse the membrane as a helical segment. Residues 85 to 95 (RPLFRWQLCPG) are Cytoplasmic-facing. A helical transmembrane segment spans residues 96 to 116 (WPVLAQLAVGSALFSIVVPVL). Residues 117-129 (APGLGSTRSSALC) lie on the Extracellular side of the membrane. The helical transmembrane segment at 130-153 (SLGYCVWYGSAFAQALLLGCHASL) threads the bilayer. Residues 154-166 (GHRLGAGQVPGLT) are Cytoplasmic-facing. The chain crosses the membrane as a helical span at residues 167–187 (LGLTVGIWGVAALLTLPVTLA). Residues 188–207 (SGASGGLCTLIYSTELKALQ) are Extracellular-facing. A helical transmembrane segment spans residues 208–228 (ATHTVACLAIFVLLPLGLFGA). Topologically, residues 229 to 244 (KGLKKALGMGPGPWMN) are cytoplasmic. The helical transmembrane segment at 245–265 (ILWAWFIFWWPHGVVLGLDFL) threads the bilayer. The Extracellular portion of the chain corresponds to 266–287 (VRSKLLLLSTCLAQQALDLLLN). Residues 288-308 (LAEALAILHCVATPLLLALFC) traverse the membrane as a helical segment. Residues 309–336 (HQATRTLLPSLPLPEGWSSHLDTLGSKS) are Cytoplasmic-facing.

This sequence belongs to the G-protein coupled receptor 1 family. Atypical chemokine receptor subfamily. As to quaternary structure, (Microbial infection) Interacts (via N-terminal extracellular domain) with Plasmodium vivax Duffy receptor (PVDR) (via PvRII region). In terms of assembly, (Microbial infection) Interacts (via N-terminal extracellular domain) with Plasmodium knowlesi Duffy receptor alpha form (DBPalpha) (via region II). Post-translationally, sulfation at Tyr-41 facilitates interaction with MGSA/CXCL1, RANTES/CCL5 and MCP-1/CCL2 but not IL8/CXCL8. Sulfation at Tyr-30 facilitates interaction with IL8/CXCL8. In terms of processing, (Microbial infection) Sulfation at Tyr-41 facilitates interaction with Plasmodium vivax Duffy receptor (PVDR). Sulfation at Tyr-30/Tyr-41 and Tyr-41 alone increases binding affinity of Plasmodium vivax parasites and likely promotes invasion of red blood cells. (Microbial infection) Sulfation at Tyr-41 facilitates interaction with Plasmodium knowlesi Duffy receptor alpha form (DBPalpha). Sulfation at Tyr-30/Tyr-41 and Tyr-41 alone increases binding affinity of Plasmodium knowlesi parasites and likely promotes invasion of red blood cells. In terms of tissue distribution, found in adult kidney, adult spleen, bone marrow and fetal liver. In particular, it is expressed along postcapillary venules throughout the body, except in the adult liver. Erythroid cells and postcapillary venule endothelium are the principle tissues expressing duffy. Fy(-A-B) individuals do not express duffy in the bone marrow, however they do, in postcapillary venule endothelium.

It is found in the early endosome. It localises to the recycling endosome. The protein localises to the membrane. Its function is as follows. Atypical chemokine receptor that controls chemokine levels and localization via high-affinity chemokine binding that is uncoupled from classic ligand-driven signal transduction cascades, resulting instead in chemokine sequestration, degradation, or transcytosis. Also known as interceptor (internalizing receptor) or chemokine-scavenging receptor or chemokine decoy receptor. Has a promiscuous chemokine-binding profile, interacting with inflammatory chemokines of both the CXC and the CC subfamilies but not with homeostatic chemokines. Acts as a receptor for chemokines including CCL2, CCL5, CCL7, CCL11, CCL13, CCL14, CCL17, CXCL5, CXCL6, IL8/CXCL8, CXCL11, GRO, RANTES, MCP-1 and TARC. May regulate chemokine bioavailability and, consequently, leukocyte recruitment through two distinct mechanisms: when expressed in endothelial cells, it sustains the abluminal to luminal transcytosis of tissue-derived chemokines and their subsequent presentation to circulating leukocytes; when expressed in erythrocytes, serves as blood reservoir of cognate chemokines but also as a chemokine sink, buffering potential surges in plasma chemokine levels. (Microbial infection) Acts as a receptor for the malaria parasite Plasmodium vivax. Functionally, (Microbial infection) Acts as a receptor for the malaria parasite Plasmodium knowlesi. The chain is Atypical chemokine receptor 1 (ACKR1) from Homo sapiens (Human).